We begin with the raw amino-acid sequence, 595 residues long: MFS-type efflux pump MFS2 (595 aa).

The N-linked (GlcNAc...) asparagine glycan is linked to N62. 12 consecutive transmembrane segments (helical) span residues 69–89 (WSIT…SSAY), 106–126 (VITL…LIWA), 136–156 (LLFF…AGSP), 166–186 (FFAG…IADM), 197–217 (GIFA…GGFL), 225–245 (WVEG…SIFL), 301–321 (PIVL…YMLF), 336–356 (PGIG…AMVI), 381–401 (LPVA…FAWT), 409–429 (IVSI…FLSL), 442–462 (ASVL…FPLF), and 478–498 (IPAF…IYGA).

It belongs to the major facilitator superfamily. DHA1 family. Polyamines/proton antiporter (TC 2.A.1.2.16) subfamily.

Its subcellular location is the cell membrane. Its function is as follows. MFS-type efflux pump involved in the modulation susceptibility to fluconazole and voriconazole, 2 azoles with similar molecular structure. In Trichophyton rubrum (strain ATCC MYA-4607 / CBS 118892) (Athlete's foot fungus), this protein is MFS-type efflux pump MFS2.